Reading from the N-terminus, the 894-residue chain is Kinesin-like protein KIN-UB (894 aa).

The tract at residues M1 to A53 is disordered. A compositionally biased stretch (low complexity) spans S19–I50. A Kinesin motor domain is found at R60 to V402. G145–T152 provides a ligand contact to ATP. Positions R372–G380 match the D-BOX motif. Positions V423 to E588 form a coiled coil. 2 disordered regions span residues E530–E550 and R598–N623. A compositionally biased stretch (polar residues) spans N603–N623. ARM repeat units lie at residues K626–A665, E667–M707, E709–G749, and D751–K790.

It belongs to the TRAFAC class myosin-kinesin ATPase superfamily. Kinesin family. Ungrouped subfamily. As to quaternary structure, interacts (via C-terminus) with NEK5. Expressed in the basal regions and petioles of immature leaves and in the root elongation zone.

It localises to the cytoplasm. The protein localises to the cytoskeleton. In terms of biological role, involved in the control of epidermal-cell morphogenesis in roots and helical growth of roots by promoting microtubule depolymerization and limiting the accumulation of endoplasmic microtubules. Seems to be involved in the control of cell-file rotation (or twisting). The polypeptide is Kinesin-like protein KIN-UB (Arabidopsis thaliana (Mouse-ear cress)).